Consider the following 520-residue polypeptide: 2-isopropylmalate synthase (520 aa).

The Pyruvate carboxyltransferase domain occupies Val5 to Tyr267. Residues Asp14, His202, His204, and Asn238 each contribute to the Mn(2+) site. The tract at residues Arg392 to Val520 is regulatory domain.

Belongs to the alpha-IPM synthase/homocitrate synthase family. LeuA type 1 subfamily. Homodimer. The cofactor is Mn(2+).

Its subcellular location is the cytoplasm. The catalysed reaction is 3-methyl-2-oxobutanoate + acetyl-CoA + H2O = (2S)-2-isopropylmalate + CoA + H(+). It functions in the pathway amino-acid biosynthesis; L-leucine biosynthesis; L-leucine from 3-methyl-2-oxobutanoate: step 1/4. Functionally, catalyzes the condensation of the acetyl group of acetyl-CoA with 3-methyl-2-oxobutanoate (2-ketoisovalerate) to form 3-carboxy-3-hydroxy-4-methylpentanoate (2-isopropylmalate). The protein is 2-isopropylmalate synthase of Yersinia pseudotuberculosis serotype O:1b (strain IP 31758).